The primary structure comprises 347 residues: UDP-3-O-acylglucosamine N-acyltransferase 1 (347 aa).

His246 functions as the Proton acceptor in the catalytic mechanism.

The protein belongs to the transferase hexapeptide repeat family. LpxD subfamily. In terms of assembly, homotrimer.

It catalyses the reaction a UDP-3-O-[(3R)-3-hydroxyacyl]-alpha-D-glucosamine + a (3R)-hydroxyacyl-[ACP] = a UDP-2-N,3-O-bis[(3R)-3-hydroxyacyl]-alpha-D-glucosamine + holo-[ACP] + H(+). The protein operates within bacterial outer membrane biogenesis; LPS lipid A biosynthesis. Functionally, catalyzes the N-acylation of UDP-3-O-acylglucosamine using 3-hydroxyacyl-ACP as the acyl donor. Is involved in the biosynthesis of lipid A, a phosphorylated glycolipid that anchors the lipopolysaccharide to the outer membrane of the cell. The sequence is that of UDP-3-O-acylglucosamine N-acyltransferase 1 from Francisella tularensis subsp. tularensis (strain SCHU S4 / Schu 4).